The following is a 503-amino-acid chain: Cytochrome P450 11B1, mitochondrial (503 aa).

Residues 1–24 (MALRAKAEVCMAAPWLSLQRARAL) constitute a mitochondrion transit peptide. C450 contacts heme.

The protein belongs to the cytochrome P450 family. Heme is required as a cofactor.

The protein localises to the mitochondrion inner membrane. The catalysed reaction is a steroid + 2 reduced [adrenodoxin] + O2 + 2 H(+) = an 11beta-hydroxysteroid + 2 oxidized [adrenodoxin] + H2O. The enzyme catalyses 11-deoxycortisol + 2 reduced [adrenodoxin] + O2 + 2 H(+) = cortisol + 2 oxidized [adrenodoxin] + H2O. It catalyses the reaction 21-hydroxyprogesterone + 2 reduced [adrenodoxin] + O2 + 2 H(+) = corticosterone + 2 oxidized [adrenodoxin] + H2O. It carries out the reaction 21-hydroxyprogesterone + 2 reduced [adrenodoxin] + O2 + 2 H(+) = 18-hydroxy-11-deoxycorticosterone + 2 oxidized [adrenodoxin] + H2O. The catalysed reaction is 21-hydroxyprogesterone + 2 reduced [adrenodoxin] + O2 + 2 H(+) = 19-hydroxy-11-deoxycorticosterone + 2 oxidized [adrenodoxin] + H2O. The enzyme catalyses cortisol + 2 reduced [adrenodoxin] + O2 + 2 H(+) = 18-hydroxycortisol + 2 oxidized [adrenodoxin] + H2O. It catalyses the reaction 11-deoxycortisol + 2 reduced [adrenodoxin] + O2 + 2 H(+) = 18-hydroxy-11-deoxycortisol + 2 oxidized [adrenodoxin] + H2O. Its pathway is steroid biosynthesis; glucocorticoid biosynthesis. It participates in steroid hormone biosynthesis. A cytochrome P450 monooxygenase involved in the biosynthesis of adrenal corticoids. Catalyzes a variety of reactions that are essential for many species, including detoxification, defense, and the formation of endogenous chemicals like steroid hormones. Steroid 11beta, 18- and 19-hydroxylase with preferred regioselectivity at 11beta, then 18, and lastly 19. Catalyzes the hydroxylation of 11-deoxycortisol and 11-deoxycorticosterone (21-hydroxyprogesterone) at 11beta position, yielding cortisol or corticosterone, respectively, but cannot produce aldosterone. Mechanistically, uses molecular oxygen inserting one oxygen atom into a substrate for hydroxylation and reducing the second into a water molecule. Two electrons are provided by NADPH via a two-protein mitochondrial transfer system comprising flavoprotein FDXR (adrenodoxin/ferredoxin reductase) and nonheme iron-sulfur protein FDX1 or FDX2 (adrenodoxin/ferredoxin). Due to its lack of 18-oxidation activity, it is incapable of generating aldosterone. Could also be involved in the androgen metabolic pathway. The protein is Cytochrome P450 11B1, mitochondrial (CYP11B1) of Papio hamadryas ursinus (Chacma baboon).